The primary structure comprises 363 residues: UV excision repair protein RAD23 homolog A (363 aa).

One can recognise a Ubiquitin-like domain in the interval 1–81 (MAVTITLKTL…VVVMVTKTKA (81 aa)). The interval 81-160 (AGQGTSAPPE…EDAASTLVTG (80 aa)) is disordered. A compositionally biased stretch (low complexity) spans 85–103 (TSAPPEASPTAAPESSTSF). Residue Lys-122 forms a Glycyl lysine isopeptide (Lys-Gly) (interchain with G-Cter in ubiquitin) linkage. A phosphoserine mark is found at Ser-123, Ser-128, Ser-133, Ser-136, and Ser-138. The segment covering 126–147 (EESAPTTSPESVSGSVPSSGSS) has biased composition (low complexity). The UBA 1 domain maps to 161-201 (SEYETMLTEIMSMGYERERVVAALRASYNNPHRAVEYLLTG). Residues 203-227 (PGSPEPEHGSVQESQVSEQPATEAA) form a disordered region. Ser-205 carries the post-translational modification Phosphoserine. Positions 213–222 (VQESQVSEQP) are enriched in polar residues. 2 positions are modified to phosphoserine: Ser-295 and Ser-357. The UBA 2 domain maps to 318–358 (PQEKEAIERLKALGFPESLVIQAYFACEKNENLAANFLLSQ). The interval 319–363 (QEKEAIERLKALGFPESLVIQAYFACEKNENLAANFLLSQNFDDE) is HIV-1 vpr binding.

Belongs to the RAD23 family. Interacts with XPC; the interaction is suggesting the existence of a functional equivalent variant XPC complex. Interacts with PSMD4 and PSMC5. Interacts with ATXN3. Interacts with UBQLN2. As to quaternary structure, (Microbial infection) Interacts with HIV-1 Vpr.

It is found in the nucleus. Functionally, multiubiquitin chain receptor involved in modulation of proteasomal degradation. Binds to 'Lys-48'-linked polyubiquitin chains in a length-dependent manner and with a lower affinity to 'Lys-63'-linked polyubiquitin chains. Proposed to be capable to bind simultaneously to the 26S proteasome and to polyubiquitinated substrates and to deliver ubiquitinated proteins to the proteasome. Involved in nucleotide excision repair and is thought to be functional equivalent for RAD23B in global genome nucleotide excision repair (GG-NER) by association with XPC. In vitro, the XPC:RAD23A dimer has NER activity. Can stabilize XPC. Its function is as follows. (Microbial infection) Involved in Vpr-dependent replication of HIV-1 in non-proliferating cells and primary macrophages. Required for the association of HIV-1 Vpr with the host proteasome. This Homo sapiens (Human) protein is UV excision repair protein RAD23 homolog A (RAD23A).